A 340-amino-acid polypeptide reads, in one-letter code: Protein-arginine kinase (340 aa).

The 228-residue stretch at 14-241 folds into the Phosphagen kinase C-terminal domain; the sequence is IVLSSRIRLA…YQIINQEKLA (228 aa). ATP-binding positions include 17–21, Arg112, 163–167, and 194–199; these read SSRIR, RASVM, and RGIYGE.

Belongs to the ATP:guanido phosphotransferase family.

The catalysed reaction is L-arginyl-[protein] + ATP = N(omega)-phospho-L-arginyl-[protein] + ADP + H(+). Catalyzes the specific phosphorylation of arginine residues in proteins. The chain is Protein-arginine kinase from Clostridium tetani (strain Massachusetts / E88).